A 270-amino-acid polypeptide reads, in one-letter code: L-fucose dehydrogenase (270 aa).

12 residues coordinate NAD(+): arginine 19, isoleucine 21, aspartate 40, lysine 41, aspartate 62, valine 63, asparagine 89, tyrosine 154, lysine 158, isoleucine 187, threonine 189, and leucine 191.

Belongs to the short-chain dehydrogenases/reductases (SDR) family.

The enzyme catalyses L-fucose + NAD(+) = L-fucono-1,5-lactone + NADH + H(+). The catalysed reaction is D-arabinose + NAD(+) = D-arabinono-1,5-lactone + NADH + H(+). It carries out the reaction L-galactose + NAD(+) = L-galactono-1,5-lactone + NADH + H(+). Functionally, catalyzes the NAD(+)-dependent oxidation of L-fucose, yielding L-fucono-1,5-lactone, which rapidly converts spontaneously to L-fucone-1,4-lactone. Does not use NADPH. Displays low activity on L-fucose, D-arabinose and L-galactose compared with rabbit and human. This is consitent with the low L-fucose metabolism observed in this species. The polypeptide is L-fucose dehydrogenase (Hsd17b14) (Rattus norvegicus (Rat)).